The chain runs to 143 residues: Hemoglobin subunit alpha-A (143 aa).

Positions 2–143 (SLSGKDKSVV…LALALAERYR (142 aa)) constitute a Globin domain. H60 contributes to the O2 binding site. A heme b-binding site is contributed by H89.

It belongs to the globin family. Heterotetramer of two alpha chains and two beta chains. Red blood cells.

Involved in oxygen transport from gills to the various peripheral tissues. The sequence is that of Hemoglobin subunit alpha-A (hbaa) from Seriola quinqueradiata (Five-ray yellowtail).